A 365-amino-acid polypeptide reads, in one-letter code: Anhydro-N-acetylmuramic acid kinase (365 aa).

9 to 16 (GTSLDGVD) contacts ATP.

Belongs to the anhydro-N-acetylmuramic acid kinase family.

It catalyses the reaction 1,6-anhydro-N-acetyl-beta-muramate + ATP + H2O = N-acetyl-D-muramate 6-phosphate + ADP + H(+). It functions in the pathway amino-sugar metabolism; 1,6-anhydro-N-acetylmuramate degradation. Its pathway is cell wall biogenesis; peptidoglycan recycling. In terms of biological role, catalyzes the specific phosphorylation of 1,6-anhydro-N-acetylmuramic acid (anhMurNAc) with the simultaneous cleavage of the 1,6-anhydro ring, generating MurNAc-6-P. Is required for the utilization of anhMurNAc either imported from the medium or derived from its own cell wall murein, and thus plays a role in cell wall recycling. In Rhodopseudomonas palustris (strain BisB18), this protein is Anhydro-N-acetylmuramic acid kinase.